A 522-amino-acid polypeptide reads, in one-letter code: Peptide chain release factor 3 (522 aa).

Residues 10 to 277 enclose the tr-type G domain; the sequence is ASRKTFAIIS…TFVDFAPAPS (268 aa). GTP is bound by residues 19 to 26, 87 to 91, and 141 to 144; these read SHPDAGKT, DTPGH, and NKMD.

Belongs to the TRAFAC class translation factor GTPase superfamily. Classic translation factor GTPase family. PrfC subfamily.

The protein resides in the cytoplasm. Functionally, increases the formation of ribosomal termination complexes and stimulates activities of RF-1 and RF-2. It binds guanine nucleotides and has strong preference for UGA stop codons. It may interact directly with the ribosome. The stimulation of RF-1 and RF-2 is significantly reduced by GTP and GDP, but not by GMP. The protein is Peptide chain release factor 3 of Listeria monocytogenes serovar 1/2a (strain ATCC BAA-679 / EGD-e).